A 244-amino-acid polypeptide reads, in one-letter code: Phosphoadenosine 5'-phosphosulfate reductase (244 aa).

The Nucleophile; cysteine thiosulfonate intermediate role is filled by Cys-239.

Belongs to the PAPS reductase family. CysH subfamily.

It is found in the cytoplasm. It catalyses the reaction [thioredoxin]-disulfide + sulfite + adenosine 3',5'-bisphosphate + 2 H(+) = [thioredoxin]-dithiol + 3'-phosphoadenylyl sulfate. Its pathway is sulfur metabolism; hydrogen sulfide biosynthesis; sulfite from sulfate: step 3/3. In terms of biological role, catalyzes the formation of sulfite from phosphoadenosine 5'-phosphosulfate (PAPS) using thioredoxin as an electron donor. This chain is Phosphoadenosine 5'-phosphosulfate reductase, found in Shigella boydii serotype 4 (strain Sb227).